Reading from the N-terminus, the 291-residue chain is Probable cell wall amidase LytH (291 aa).

The N-terminal stretch at 1-40 (MKKIDSWLTKHGLKNRLTLVVIVIFIIFLILLFMFVNLSD) is a signal peptide. One can recognise an SH3b domain in the interval 41 to 105 (EDTGQITITE…WVAGWHTNLN (65 aa)). One can recognise a MurNAc-LAA domain in the interval 122–286 (IVLDPGHGGS…VEQAIVDGLK (165 aa)). The tract at residues 123-147 (VLDPGHGGSDQGASSSTPSKSLEKN) is disordered. Residues 133 to 142 (QGASSSTPSK) show a composition bias toward polar residues.

It belongs to the N-acetylmuramoyl-L-alanine amidase 3 family.

It is found in the secreted. Probably involved in cell-wall metabolism. This Staphylococcus epidermidis (strain ATCC 12228 / FDA PCI 1200) protein is Probable cell wall amidase LytH (lytH).